Reading from the N-terminus, the 96-residue chain is MLFQVRMDVHLPVSMPTDQANQIKSVEKAYSQELQRQGKWRHIWRITGQYSNISIFDVESNEELHTILQGLPLYPYMKIEVMALNRHPSSVRDDDS.

Belongs to the muconolactone Delta-isomerase family. In terms of assembly, homodecamer.

It carries out the reaction (S)-muconolactone = (4,5-dihydro-5-oxofuran-2-yl)-acetate. It participates in aromatic compound metabolism; beta-ketoadipate pathway; 5-oxo-4,5-dihydro-2-furylacetate from catechol: step 3/3. The sequence is that of Muconolactone Delta-isomerase (catC) from Acinetobacter baylyi (strain ATCC 33305 / BD413 / ADP1).